The chain runs to 106 residues: Toxin-like structure LSTX-D7 (106 aa).

A signal peptide spans 1–20 (MMKVLVVFALLVTLISYSSS). The propeptide occupies 21-41 (EGIDDLEADELLSLMANEQTR). Cystine bridges form between cysteine 45–cysteine 60, cysteine 52–cysteine 69, cysteine 59–cysteine 85, and cysteine 71–cysteine 83.

The protein belongs to the neurotoxin 19 (CSTX) family. 02 (D7) subfamily. Expressed by the venom gland.

It localises to the secreted. The sequence is that of Toxin-like structure LSTX-D7 from Lycosa singoriensis (Wolf spider).